The chain runs to 349 residues: D-arabinitol dehydrogenase 1 (349 aa).

7 residues coordinate Zn(2+): Cys46, His67, Cys97, Cys100, Cys103, Cys111, and Glu151.

Belongs to the zinc-containing alcohol dehydrogenase family. Requires Zn(2+) as cofactor.

It localises to the cell projection. It catalyses the reaction D-arabinitol + NADP(+) = D-xylulose + NADPH + H(+). The enzyme catalyses D-arabinitol + NADP(+) = D-ribulose + NADPH + H(+). In terms of biological role, D-arabinitol dehydrogenase which mostly produces D-arabinitol in haustoria, the appendages of the parasitic fungus that penetrate the host's tissue and draws nutrients from it. D-arabinitol accumulation may serve as a carbohydrate storage compound. D-arabinitol is also capable of quenching reactive oxygen species involved in host plant defense reactions, thus providing protection for the rust fungus during the pathogenic interaction. The protein is D-arabinitol dehydrogenase 1 (ARD1) of Uromyces fabae (Rust fungus).